Here is a 171-residue protein sequence, read N- to C-terminus: 3-hydroxydecanoyl-[acyl-carrier-protein] dehydratase (171 aa).

H70 is a catalytic residue.

This sequence belongs to the thioester dehydratase family. FabA subfamily. In terms of assembly, homodimer.

The protein localises to the cytoplasm. It carries out the reaction a (3R)-hydroxyacyl-[ACP] = a (2E)-enoyl-[ACP] + H2O. It catalyses the reaction (3R)-hydroxydecanoyl-[ACP] = (2E)-decenoyl-[ACP] + H2O. The catalysed reaction is (2E)-decenoyl-[ACP] = (3Z)-decenoyl-[ACP]. The protein operates within lipid metabolism; fatty acid biosynthesis. Functionally, necessary for the introduction of cis unsaturation into fatty acids. Catalyzes the dehydration of (3R)-3-hydroxydecanoyl-ACP to E-(2)-decenoyl-ACP and then its isomerization to Z-(3)-decenoyl-ACP. Can catalyze the dehydratase reaction for beta-hydroxyacyl-ACPs with saturated chain lengths up to 16:0, being most active on intermediate chain length. The chain is 3-hydroxydecanoyl-[acyl-carrier-protein] dehydratase from Nitrosococcus oceani (strain ATCC 19707 / BCRC 17464 / JCM 30415 / NCIMB 11848 / C-107).